The primary structure comprises 199 residues: NAD(P)H quinone oxidoreductase PST3 (199 aa).

A Flavodoxin-like domain is found at 5 to 193 (VAIIIYSLYH…EIAFIQGKSF (189 aa)). FMN-binding positions include 11–15 (SLYHH) and 111–165 (IFVS…SPYG).

The protein belongs to the WrbA family. It depends on FMN as a cofactor.

It localises to the cell membrane. The enzyme catalyses a quinone + NADH + H(+) = a quinol + NAD(+). It catalyses the reaction a quinone + NADPH + H(+) = a quinol + NADP(+). Functionally, flavodoxin-like protein (FLP) that plays a role in cell wall integrity, oxidative stress protection and virulence. FLPs act as NAD(P)H quinone oxidoreductases. Reduces ubiquinone (coenzyme Q), enabling it to serve as an antioxidant in the membrane. In Candida albicans (strain SC5314 / ATCC MYA-2876) (Yeast), this protein is NAD(P)H quinone oxidoreductase PST3.